The primary structure comprises 120 residues: Large ribosomal subunit protein uL18 (120 aa).

This sequence belongs to the universal ribosomal protein uL18 family. In terms of assembly, part of the 50S ribosomal subunit; part of the 5S rRNA/L5/L18/L25 subcomplex. Contacts the 5S and 23S rRNAs.

In terms of biological role, this is one of the proteins that bind and probably mediate the attachment of the 5S RNA into the large ribosomal subunit, where it forms part of the central protuberance. The protein is Large ribosomal subunit protein uL18 of Picosynechococcus sp. (strain ATCC 27264 / PCC 7002 / PR-6) (Agmenellum quadruplicatum).